We begin with the raw amino-acid sequence, 336 residues long: tRNA N6-adenosine threonylcarbamoyltransferase (336 aa).

Fe cation-binding residues include His114 and His118. Substrate contacts are provided by residues 136 to 140 (LVSGG), Asp169, Gly182, Asp186, and Asn275. Residue Asp302 coordinates Fe cation.

It belongs to the KAE1 / TsaD family. Requires Fe(2+) as cofactor.

The protein localises to the cytoplasm. It catalyses the reaction L-threonylcarbamoyladenylate + adenosine(37) in tRNA = N(6)-L-threonylcarbamoyladenosine(37) in tRNA + AMP + H(+). Functionally, required for the formation of a threonylcarbamoyl group on adenosine at position 37 (t(6)A37) in tRNAs that read codons beginning with adenine. Is involved in the transfer of the threonylcarbamoyl moiety of threonylcarbamoyl-AMP (TC-AMP) to the N6 group of A37, together with TsaE and TsaB. TsaD likely plays a direct catalytic role in this reaction. The polypeptide is tRNA N6-adenosine threonylcarbamoyltransferase (Streptococcus agalactiae serotype V (strain ATCC BAA-611 / 2603 V/R)).